A 414-amino-acid polypeptide reads, in one-letter code: Gamma-glutamyl phosphate reductase (414 aa).

The protein belongs to the gamma-glutamyl phosphate reductase family.

It is found in the cytoplasm. The catalysed reaction is L-glutamate 5-semialdehyde + phosphate + NADP(+) = L-glutamyl 5-phosphate + NADPH + H(+). It participates in amino-acid biosynthesis; L-proline biosynthesis; L-glutamate 5-semialdehyde from L-glutamate: step 2/2. Functionally, catalyzes the NADPH-dependent reduction of L-glutamate 5-phosphate into L-glutamate 5-semialdehyde and phosphate. The product spontaneously undergoes cyclization to form 1-pyrroline-5-carboxylate. This Xanthomonas oryzae pv. oryzae (strain MAFF 311018) protein is Gamma-glutamyl phosphate reductase.